A 93-amino-acid polypeptide reads, in one-letter code: Large ribosomal subunit protein bL31 (93 aa).

Positions 72–93 (VKTVSSNADNQKETTEELIKNK) are disordered. Basic and acidic residues predominate over residues 81 to 93 (NQKETTEELIKNK).

The protein belongs to the bacterial ribosomal protein bL31 family. Type A subfamily. As to quaternary structure, part of the 50S ribosomal subunit.

Functionally, binds the 23S rRNA. The chain is Large ribosomal subunit protein bL31 from Onion yellows phytoplasma (strain OY-M).